The primary structure comprises 171 residues: uncharacterized protein (171 aa).

A disordered region spans residues 123–171 (CTKRDLRNDPPPAYQPDDPLKDLRKNFEKKEKPTWNDVEKKKNGVFEFH). Residues 140–171 (DPLKDLRKNFEKKEKPTWNDVEKKKNGVFEFH) are compositionally biased toward basic and acidic residues.

This is an uncharacterized protein from Caenorhabditis elegans.